We begin with the raw amino-acid sequence, 313 residues long: Protein FixB (313 aa).

Leu-255–Asp-283 is an FAD binding site.

The protein belongs to the ETF alpha-subunit/FixB family. Heterodimer of FixA and FixB.

It participates in amine and polyamine metabolism; carnitine metabolism. Functionally, required for anaerobic carnitine reduction. May bring reductant to CaiA. In Shigella flexneri, this protein is Protein FixB.